A 490-amino-acid chain; its full sequence is Katanin p60 ATPase-containing subunit A-like 1 (490 aa).

Met-1 is subject to N-acetylmethionine. A disordered region spans residues Asp-95–Ala-184. The segment covering Pro-116 to Met-127 has biased composition (basic and acidic residues). The span at Ala-128 to Ala-139 shows a compositional bias: low complexity. Basic and acidic residues predominate over residues Ser-143–Met-169. Ser-174 bears the Phosphoserine mark. Gly-248–Thr-255 is an ATP binding site.

Belongs to the AAA ATPase family. Katanin p60 subunit A1 subfamily. A-like 1 sub-subfamily. As to quaternary structure, interacts with KATNB1 and KATNBL1. Expressed in testis, restricted to Sertoli cells (at protein level).

It localises to the cytoplasm. The protein resides in the cytoskeleton. The protein localises to the spindle pole. Its subcellular location is the spindle. It carries out the reaction n ATP + n H2O + a microtubule = n ADP + n phosphate + (n+1) alpha/beta tubulin heterodimers.. Its function is as follows. Regulates microtubule dynamics in Sertoli cells, a process that is essential for spermiogenesis and male fertility. Severs microtubules in an ATP-dependent manner, promoting rapid reorganization of cellular microtubule arrays. Has microtubule-severing activity in vitro. The sequence is that of Katanin p60 ATPase-containing subunit A-like 1 from Homo sapiens (Human).